Here is a 357-residue protein sequence, read N- to C-terminus: tRNA-specific 2-thiouridylase MnmA (357 aa).

Residues Gly7 to Ser14 and Met33 contribute to the ATP site. The Nucleophile role is filled by Cys103. Cys103 and Cys200 are joined by a disulfide. Gly127 contributes to the ATP binding site. The interaction with tRNA stretch occupies residues Lys150–Gln152. The Cysteine persulfide intermediate role is filled by Cys200. The interaction with tRNA stretch occupies residues Arg306–Tyr307.

The protein belongs to the MnmA/TRMU family.

Its subcellular location is the cytoplasm. It carries out the reaction S-sulfanyl-L-cysteinyl-[protein] + uridine(34) in tRNA + AH2 + ATP = 2-thiouridine(34) in tRNA + L-cysteinyl-[protein] + A + AMP + diphosphate + H(+). Its function is as follows. Catalyzes the 2-thiolation of uridine at the wobble position (U34) of tRNA, leading to the formation of s(2)U34. This Lachnoclostridium phytofermentans (strain ATCC 700394 / DSM 18823 / ISDg) (Clostridium phytofermentans) protein is tRNA-specific 2-thiouridylase MnmA.